The sequence spans 485 residues: N-succinylglutamate 5-semialdehyde dehydrogenase (485 aa).

Residue 220 to 225 (GSANTG) coordinates NAD(+). Catalysis depends on residues Glu243 and Cys278.

This sequence belongs to the aldehyde dehydrogenase family. AstD subfamily.

It carries out the reaction N-succinyl-L-glutamate 5-semialdehyde + NAD(+) + H2O = N-succinyl-L-glutamate + NADH + 2 H(+). Its pathway is amino-acid degradation; L-arginine degradation via AST pathway; L-glutamate and succinate from L-arginine: step 4/5. Functionally, catalyzes the NAD-dependent reduction of succinylglutamate semialdehyde into succinylglutamate. This chain is N-succinylglutamate 5-semialdehyde dehydrogenase, found in Vibrio vulnificus (strain YJ016).